The following is a 319-amino-acid chain: Cobalamin biosynthesis protein CobD (319 aa).

A run of 5 helical transmembrane segments spans residues 56–76, 78–98, 153–173, 204–224, and 296–316; these read VMWL…LALA, GIHP…ALAG, VDGI…LAMA, VANF…AVLC, and LMWV…YWLV.

Belongs to the CobD/CbiB family.

Its subcellular location is the cell membrane. The protein operates within cofactor biosynthesis; adenosylcobalamin biosynthesis. Functionally, converts cobyric acid to cobinamide by the addition of aminopropanol on the F carboxylic group. The protein is Cobalamin biosynthesis protein CobD of Klebsiella pneumoniae subsp. pneumoniae (strain ATCC 700721 / MGH 78578).